The sequence spans 123 residues: Large ribosomal subunit protein bL17 (123 aa).

The protein belongs to the bacterial ribosomal protein bL17 family. In terms of assembly, part of the 50S ribosomal subunit. Contacts protein L32.

This chain is Large ribosomal subunit protein bL17, found in Borrelia garinii subsp. bavariensis (strain ATCC BAA-2496 / DSM 23469 / PBi) (Borreliella bavariensis).